The primary structure comprises 1286 residues: CLIP-associating protein 2 (1286 aa).

The tract at residues 1-40 (MRRLICKRICDYKSFDDEESVDGNRPSSAASAFKVPAPKT) is golgi localization. 2 positions are modified to phosphoserine: S14 and S20. The segment at 17–70 (DEESVDGNRPSSAASAFKVPAPKTPGNPVNSARKPGSAGGPKAGGTSKEGGAGA) is disordered. Positions 53-69 (SAGGPKAGGTSKEGGAG) are enriched in gly residues. The TOG 1 stretch occupies residues 66–317 (GGAGAVDEDD…KSLQTYLKSS (252 aa)). HEAT repeat units follow at residues 179–214 (HGAE…IRHT), 215–251 (HVPR…EWQT), and 256–293 (RHAA…HFPG). Disordered regions lie at residues 320-350 (VASL…TANP) and 355-374 (GRVS…LQRS). S322, S333, and S336 each carry phosphoserine. Residues 322–340 (SLPQSDRSSSSSQESLNRP) are compositionally biased toward low complexity. Over residues 341–350 (FSSKWSTANP) the composition is skewed to polar residues. 3 positions are modified to phosphoserine: S374, S376, and S413. The segment at 410–473 (SYASLEDTSD…GSRSGSPGRV (64 aa)) is disordered. Residues 417-431 (TSDKMDGTASEDGRV) show a composition bias toward basic and acidic residues. An interaction with microtubules, MAPRE1 and MAPRE3 region spans residues 450-565 (RGRSRTKMVS…GPGYGMSQSS (116 aa)). The segment covering 459-473 (SQSQPGSRSGSPGRV) has biased composition (low complexity). Residues S461, S465, S469, S484, and S495 each carry the phosphoserine modification. Residues 492 to 566 (NSASAQKRSK…PGYGMSQSSR (75 aa)) are disordered. The SXIP motif 1; mediates interaction with MAPRE1 and targeting to microtubule plus ends signature appears at 500-503 (SKIP). S513 carries the post-translational modification Phosphoserine. Positions 523–526 (SRIP) match the SXIP motif 2; mediates interaction with MAPRE1 and targeting to microtubule plus ends motif. Residues S531, S535, S570, S572, S581, S614, and S620 each carry the phosphoserine modification. The span at 606-616 (RYESYGMHSDD) shows a compositional bias: basic and acidic residues. The disordered stretch occupies residues 606 to 638 (RYESYGMHSDDDANSDASSACSERSYSSRNGSI). A compositionally biased stretch (low complexity) spans 620-634 (SDASSACSERSYSSR). The TOG 2 stretch occupies residues 642 to 873 (MRQTEDVAEV…TKLLHNHLRN (232 aa)). 2 HEAT repeats span residues 702 to 739 (KVFS…KMGA) and 764 to 801 (LQFN…QMDP). T779 is subject to Phosphothreonine. The tract at residues 864–1286 (TKLLHNHLRN…DPTTDVSGQS (423 aa)) is interaction with RSN and localization to the Golgi and kinetochores. 2 disordered regions span residues 870–920 (HLRN…FDYD) and 944–990 (SFRS…QPAL). Composition is skewed to polar residues over residues 872 to 884 (RNTG…SMGS) and 893 to 914 (SPAN…TLSP). S884 is subject to Phosphoserine. 4 positions are modified to phosphoserine: S944, S947, S1005, and S1021. The segment covering 947–964 (SQEDMSEPLKRDPKKEDG) has biased composition (basic and acidic residues). The tract at residues 1009–1286 (RDYNPYNYSD…DPTTDVSGQS (278 aa)) is required for cortical localization. 3 HEAT repeats span residues 1046 to 1083 (LDHS…TQEE), 1090 to 1127 (EHFK…HQPA), and 1208 to 1245 (LLLP…VIGD).

Belongs to the CLASP family. Interacts with microtubules. Interacts with MAPRE1; probably required for targeting to the growing microtubule plus ends. Interacts with CLIP2, ERC1, MAPRE3, PHLDB2 and RSN. The interaction with ERC1 may be mediated by PHLDB2. Interacts with GCC2; recruits CLASP2 to Golgi membranes. Interacts with MACF1. Interacts with SOGA1 and MTCL1. Phosphorylated by GSK3B. Phosphorylation by GSK3B may negatively regulate binding to microtubule lattices in lamella.

The protein localises to the cytoplasm. The protein resides in the cytoskeleton. It localises to the microtubule organizing center. Its subcellular location is the centrosome. It is found in the chromosome. The protein localises to the centromere. The protein resides in the kinetochore. It localises to the spindle. Its subcellular location is the golgi apparatus. It is found in the trans-Golgi network. The protein localises to the cell membrane. The protein resides in the cell projection. It localises to the ruffle membrane. Its subcellular location is the cell cortex. Its function is as follows. Microtubule plus-end tracking protein that promotes the stabilization of dynamic microtubules. Involved in the nucleation of noncentrosomal microtubules originating from the trans-Golgi network (TGN). Required for the polarization of the cytoplasmic microtubule arrays in migrating cells towards the leading edge of the cell. May act at the cell cortex to enhance the frequency of rescue of depolymerizing microtubules by attaching their plus-ends to cortical platforms composed of ERC1 and PHLDB2. This cortical microtubule stabilizing activity is regulated at least in part by phosphatidylinositol 3-kinase signaling. Also performs a similar stabilizing function at the kinetochore which is essential for the bipolar alignment of chromosomes on the mitotic spindle. Acts as a mediator of ERBB2-dependent stabilization of microtubules at the cell cortex. In Rattus norvegicus (Rat), this protein is CLIP-associating protein 2 (Clasp2).